Consider the following 89-residue polypeptide: MISLMEARNLRKERTGVVLSNKMEKTITVAAKFKEKHPIYGKFVSKTKKYHAHDEKNECNVGDTVRIMETRPLSKTKRWRLVEIIERAK.

This sequence belongs to the universal ribosomal protein uS17 family. As to quaternary structure, part of the 30S ribosomal subunit.

Functionally, one of the primary rRNA binding proteins, it binds specifically to the 5'-end of 16S ribosomal RNA. This chain is Small ribosomal subunit protein uS17, found in Bacteroides fragilis (strain ATCC 25285 / DSM 2151 / CCUG 4856 / JCM 11019 / LMG 10263 / NCTC 9343 / Onslow / VPI 2553 / EN-2).